We begin with the raw amino-acid sequence, 368 residues long: Outer membrane protein assembly factor BamC (368 aa).

Positions M1–A18 are cleaved as a signal peptide. Residue C19 is the site of N-palmitoyl cysteine attachment. C19 is lipidated: S-diacylglycerol cysteine.

Belongs to the BamC family. In terms of assembly, part of the Bam complex.

The protein resides in the cell outer membrane. Its function is as follows. Part of the outer membrane protein assembly complex, which is involved in assembly and insertion of beta-barrel proteins into the outer membrane. This chain is Outer membrane protein assembly factor BamC, found in Pseudoalteromonas atlantica (strain T6c / ATCC BAA-1087).